Here is a 496-residue protein sequence, read N- to C-terminus: Cytochrome f, chloroplastic (496 aa).

Residues 1-149 (MASLQTPVMV…VGAAAGSANA (149 aa)) constitute a chloroplast transit peptide. 4 residues coordinate heme: tyrosine 150, cysteine 170, cysteine 173, and histidine 174. The helical transmembrane segment at 462–481 (VQAFLFFSFTVLATQTLLVV) threads the bilayer.

It belongs to the cytochrome f family. Interacts with plastocyanin and Rieske iron-sulfur protein. Heme serves as cofactor.

Its subcellular location is the plastid. The protein localises to the chloroplast thylakoid membrane. Functionally, translocates protons across the thylakoid membrane and transfers electrons from photosystem II to photosystem I. It receives electrons from the Rieske iron-sulfur protein and passes them to plastocyanin. This chain is Cytochrome f, chloroplastic (petA), found in Euglena gracilis.